The following is a 1912-amino-acid chain: Chromodomain-helicase-DNA-binding protein 4 (1912 aa).

The tract at residues 1–157 (MASGLGSPSP…PKSSAQLLED (157 aa)) is disordered. Residues 35–45 (NEEDPEEDLSE) show a composition bias toward acidic residues. Position 44 is a phosphoserine (S44). A compositionally biased stretch (basic residues) spans 113 to 131 (GKKKKKKLGPKKEKKSKSK). K133 is covalently cross-linked (Glycyl lysine isopeptide (Lys-Gly) (interchain with G-Cter in SUMO2)). Residues 135 to 145 (EEEEEDDDDDS) are compositionally biased toward acidic residues. Residues K146, K179, and K297 each participate in a glycyl lysine isopeptide (Lys-Gly) (interchain with G-Cter in SUMO2) cross-link. The interval 243–360 (ATEVAPPPPP…KKKKGEEEVT (118 aa)) is disordered. Residues 295–298 (KIKL) carry the KIKL motif. A Phosphoserine modification is found at S303. K304 is covalently cross-linked (Glycyl lysine isopeptide (Lys-Gly) (interchain with G-Cter in SUMO2)). Residues S308, S309, S310, and S319 each carry the phosphoserine modification. Positions 311-323 (EDDDLDVESDFDD) are enriched in acidic residues. Over residues 340–353 (SRSRKKLRTTKKKK) the composition is skewed to basic residues. T367 is subject to Phosphothreonine. The PHD-type 1 zinc finger occupies 370–417 (QDYCEVCQQGGEIILCDTCPRAYHMVCLDPDMEKAPEGKWSCPHCEKE). S428 carries the post-translational modification Phosphoserine. The segment at 449-496 (MEFCRVCKDGGELLCCDTCPSSYHIHCLNPPLPEIPNGEWLCPRCTCP) adopts a PHD-type 2 zinc-finger fold. The Chromo 1 domain occupies 494 to 594 (TCPALKGKVQ…SGDFGGDEEK (101 aa)). Disordered regions lie at residues 510–537 (WGQP…PLEG) and 578–603 (NDMD…NKDP). Over residues 513–522 (PPSPTPVPRP) the composition is skewed to pro residues. Position 515 is a phosphoserine (S515). A phosphothreonine mark is found at T517 and T529. Position 531 is a phosphoserine (S531). Residues K618 and K696 each participate in a glycyl lysine isopeptide (Lys-Gly) (interchain with G-Cter in SUMO2) cross-link. A Chromo 2 domain is found at 622–697 (MMIHRILNHS…KLKKVKLRKL (76 aa)). T703 is modified (phosphothreonine). K711 is covalently cross-linked (Glycyl lysine isopeptide (Lys-Gly) (interchain with G-Cter in SUMO1); alternate). A Glycyl lysine isopeptide (Lys-Gly) (interchain with G-Cter in SUMO2); alternate cross-link involves residue K711. Residues 738 to 922 (RFSWAQGTDT…FHLLNFLTPE (185 aa)) enclose the Helicase ATP-binding domain. 751–758 (DEMGLGKT) is a binding site for ATP. The DEAH box motif lies at 873–876 (DEAH). Positions 1054–1203 (LLQKMLKNLK…LTHLVVRPGL (150 aa)) constitute a Helicase C-terminal domain. The residue at position 1209 (S1209) is a Phosphoserine. Residues K1212, K1228, K1239, and K1304 each participate in a glycyl lysine isopeptide (Lys-Gly) (interchain with G-Cter in SUMO2) cross-link. S1308, S1349, and S1370 each carry phosphoserine. Disordered stretches follow at residues 1344-1401 (NYND…KPLP) and 1525-1562 (EENK…PAED). Residues K1528 and K1529 each participate in a glycyl lysine isopeptide (Lys-Gly) (interchain with G-Cter in SUMO2) cross-link. 3 positions are modified to phosphoserine: S1531, S1535, and S1537. Pro residues predominate over residues 1535 to 1544 (SPSPKTPTPS). Phosphothreonine occurs at positions 1542, 1549, and 1553. K1565 is covalently cross-linked (Glycyl lysine isopeptide (Lys-Gly) (interchain with G-Cter in SUMO2)). Phosphoserine is present on S1570. Residues 1570-1584 (SLKEEESIEGEKEVK) are compositionally biased toward basic and acidic residues. 2 disordered regions span residues 1570-1589 (SLKE…TAPE) and 1594-1644 (CTQA…VEKV). Residue K1572 forms a Glycyl lysine isopeptide (Lys-Gly) (interchain with G-Cter in SUMO2) linkage. Phosphoserine is present on S1576. The interval 1577 to 1912 (IEGEKEVKST…PTPQQVAQQQ (336 aa)) is required for interaction with PCNT. A Glycyl lysine isopeptide (Lys-Gly) (interchain with G-Cter in SUMO2) cross-link involves residue K1584. S1602 bears the Phosphoserine mark. Basic and acidic residues predominate over residues 1603–1644 (EDEKVVVEPPEGEEKVEKAEVKERTEEPMETEPKGAADVEKV). Glycyl lysine isopeptide (Lys-Gly) (interchain with G-Cter in SUMO2) cross-links involve residues K1606, K1617, and K1636. A Glycyl lysine isopeptide (Lys-Gly) (interchain with G-Cter in SUMO2); alternate cross-link involves residue K1643. K1643 carries the post-translational modification N6-acetyllysine; alternate. Residue K1647 forms a Glycyl lysine isopeptide (Lys-Gly) (interchain with G-Cter in SUMO2) linkage. Phosphothreonine is present on T1653. Glycyl lysine isopeptide (Lys-Gly) (interchain with G-Cter in SUMO2) cross-links involve residues K1660 and K1670. Residue T1679 is modified to Phosphothreonine. Residues K1687 and K1865 each participate in a glycyl lysine isopeptide (Lys-Gly) (interchain with G-Cter in SUMO2) cross-link.

It belongs to the SNF2/RAD54 helicase family. In terms of assembly, component of the nucleosome remodeling and deacetylase (NuRD) repressor complex, composed of core proteins MTA1, MTA2, MTA3, RBBP4, RBBP7, HDAC1, HDAC2, MBD2, MBD3, and peripherally associated proteins CDK2AP1, CDK2AP2, GATAD2A, GATAD2B, CHD3, CHD4 and CHD5. The exact stoichiometry of the NuRD complex is unknown, and some subunits such as MBD2 and MBD3, GATAD2A and GATAD2B, and CHD3, CHD4 and CHD5 define mutually exclusive NuRD complexes. Interacts with IKFZ1; the interaction is direct and when in part of the NuRD complex. Part of a complex containing ATR and HDAC2. Interacts with HDAC2; the interaction is direct. Interacts with the cohesin complex component RAD21; the interaction is direct. Interacts with the ISWI chromatin remodeling complex component SMARCA5; the interaction is direct. Interacts with ZGPAT; the interaction is direct. Interacts with ZMYND8; the interaction is direct, appears to occur with monomeric ZMYND8, and is increased following DNA damage. Interacts with BCL6. Interacts with BRD4. Interacts with CBX1. Interacts with CBX3. Interacts with CBX5. Interacts with GATAD2A. Interacts with HDAC1. Interacts with KLF1; the interaction depends on sumoylation of KLF1, and leads to its transcriptional repression. Interacts with MTA1. Interacts with PCNT. Interacts with RBBP7. Interacts with SETX. Interacts with TRIM27. Interacts with histone H3. Interacts with histone H4. Does not interact with PWWP2A. Does not interact with PWWP2B. Interacts (via KIKL motif) with BRD3 (via NET domain). Zn(2+) is required as a cofactor. As to expression, widely expressed.

Its subcellular location is the nucleus. The protein resides in the cytoplasm. It is found in the cytoskeleton. It localises to the microtubule organizing center. The protein localises to the centrosome. It catalyses the reaction ATP + H2O = ADP + phosphate + H(+). Its function is as follows. ATP-dependent chromatin-remodeling factor that binds and distorts nucleosomal DNA. Acts as a component of the histone deacetylase NuRD complex which participates in the remodeling of chromatin. Localizes to acetylated damaged chromatin in a ZMYND8-dependent manner, to promote transcriptional repression and double-strand break repair by homologous recombination. Involved in neurogenesis. This is Chromodomain-helicase-DNA-binding protein 4 (CHD4) from Homo sapiens (Human).